The sequence spans 504 residues: Peptidyl-prolyl cis-trans isomerase-like 4 (504 aa).

The 169-residue stretch at Met-1 to Ile-169 folds into the PPIase cyclophilin-type domain. Residues Asn-246–Ser-324 enclose the RRM domain. Over residues Arg-330–Thr-339 the composition is skewed to polar residues. Residues Arg-330–Arg-504 form a disordered region. The segment covering Gly-340–Tyr-354 has biased composition (gly residues). Basic and acidic residues-rich tracts occupy residues Gly-356–Arg-381 and Ser-416–Arg-504.

This sequence belongs to the cyclophilin-type PPIase family. PPIL4 subfamily.

The protein localises to the nucleus. It catalyses the reaction [protein]-peptidylproline (omega=180) = [protein]-peptidylproline (omega=0). Functionally, PPIases accelerate the folding of proteins. It catalyzes the cis-trans isomerization of proline imidic peptide bonds in oligopeptides. The sequence is that of Peptidyl-prolyl cis-trans isomerase-like 4 (CYP6) from Cryptococcus neoformans var. neoformans serotype D (strain B-3501A) (Filobasidiella neoformans).